The chain runs to 145 residues: Antiholin-like protein LrgA (145 aa).

4 helical membrane-spanning segments follow: residues 10-30 (PAHF…SKII), 33-53 (FMPI…VLLC), 72-92 (NIGL…GVIS), and 96-116 (FLII…TGYV).

This sequence belongs to the CidA/LrgA family. LrgA subfamily.

It is found in the cell membrane. In terms of biological role, inhibits the expression or activity of extracellular murein hydrolases by interacting, possibly with LrgB, with the holin-like proteins CidA and/or CidB. The LrgAB and CidAB proteins may affect the proton motive force of the membrane. May be involved in programmed cell death (PCD), possibly triggering PCD in response to antibiotics and environmental stresses. The polypeptide is Antiholin-like protein LrgA (Staphylococcus aureus (strain JH1)).